The sequence spans 514 residues: MLRLVSWNINGIRSPLQGVRCEEPSSCSAMAMGRILDKLDADIVCLQETKVTRDVLTEPLAIIEGYNSYFSFSRNRSGYSGVATFCKDSATPVAAEEGLSGLLSTQNGDVGCYGNMDDFTQEELRALDSEGRALLTQHKICTWEGKEKTLTLINVYCPHADPGKPERLTFKMRFYRLLQIRAEALLAAGSHVIILGDLNTAHRPIDHWDAVNMECFEEDPGRKWMDGLLSNLGCESGSHMGPFIDSYRCFQPKQKGAFTCWSTVSGARHLNYGSRLDYVLGDRTLVIDTFQSSFLLPEVMGSDHCPVGAVLSVSSVPAKQCPPLCTCFLPEFAGTQLKILRFLVHFKQDPVFKQSALQPSNQTQVHMRKNKARVRSTRSRPSKTGSSRGQKNLMSYFQPSSSGPQTSNLDLPSLGTLITPKTSEEDVMANVVEGQTKASEAKDEKEIRTSFWKSLLGGPSPMPLCGGHREPCVMRTVKKPGPNLGRHFYMCARPQGPPTDPSSRCNFFLWSRPS.

Mg(2+)-binding residues include N8 and E48. Y156 is an active-site residue. Residues D197, N199, D303, and H304 each coordinate Mg(2+). The Proton donor/acceptor role is filled by D197. H304 functions as the Proton acceptor in the catalytic mechanism. The interval 359–417 (PSNQTQVHMRKNKARVRSTRSRPSKTGSSRGQKNLMSYFQPSSSGPQTSNLDLPSLGTL) is disordered. A compositionally biased stretch (basic residues) spans 366 to 381 (HMRKNKARVRSTRSRP). Residue K371 forms a Glycyl lysine isopeptide (Lys-Gly) (interchain with G-Cter in ubiquitin) linkage. Positions 382 to 410 (SKTGSSRGQKNLMSYFQPSSSGPQTSNLD) are enriched in polar residues. The required for the interaction and colocalization with PCNA in nuclear foci in presence of oxidative-induced DNA damaging agents stretch occupies residues 390–397 (QKNLMSYF). The Zn(2+) site is built by C465, H468, C491, and C505. The segment at 465–514 (CGGHREPCVMRTVKKPGPNLGRHFYMCARPQGPPTDPSSRCNFFLWSRPS) adopts a GRF-type zinc-finger fold.

Belongs to the DNA repair enzymes AP/ExoA family. Interacts with PCNA; this interaction is triggered by reactive oxygen species and increased by misincorporation of uracil in nuclear DNA. The cofactor is Mg(2+). Mn(2+) is required as a cofactor. In terms of processing, ubiquitinated by the CUL9-RBX1 complex. Ubiquitinated by MKRN3 at Lys-371 leading to proteasomal degradation.

It is found in the nucleus. Its subcellular location is the cytoplasm. It localises to the mitochondrion. It catalyses the reaction Exonucleolytic cleavage in the 3'- to 5'-direction to yield nucleoside 5'-phosphates.. Its activity is regulated as follows. 3'-5' exonuclease activity is activated by sodium and manganese. 3'-5' exonuclease and 3'-phosphodiesterase activities are stimulated in presence of PCNA. Functionally, functions as a weak apurinic/apyrimidinic (AP) endodeoxyribonuclease in the DNA base excision repair (BER) pathway of DNA lesions induced by oxidative and alkylating agents. Initiates repair of AP sites in DNA by catalyzing hydrolytic incision of the phosphodiester backbone immediately adjacent to the damage, generating a single-strand break with 5'-deoxyribose phosphate and 3'-hydroxyl ends. Also displays double-stranded DNA 3'-5' exonuclease, 3'-phosphodiesterase activities. Shows robust 3'-5' exonuclease activity on 3'-recessed heteroduplex DNA and is able to remove mismatched nucleotides preferentially. Shows fairly strong 3'-phosphodiesterase activity involved in the removal of 3'-damaged termini formed in DNA by oxidative agents. In the nucleus functions in the PCNA-dependent BER pathway. Plays a role in reversing blocked 3' DNA ends, problematic lesions that preclude DNA synthesis. Required for somatic hypermutation (SHM) and DNA cleavage step of class switch recombination (CSR) of immunoglobulin genes. Required for proper cell cycle progression during proliferation of peripheral lymphocytes. The polypeptide is DNA-(apurinic or apyrimidinic site) endonuclease 2 (APEX2) (Bos taurus (Bovine)).